Consider the following 332-residue polypeptide: L-lactate dehydrogenase C chain (332 aa).

Residues G29–K57 and R99 each bind NAD(+). Substrate is bound by residues R106, N138, and R169. N138 contributes to the NAD(+) binding site. H193 functions as the Proton acceptor in the catalytic mechanism. Residue T248 coordinates substrate. Position 301 is a phosphoserine (S301).

Belongs to the LDH/MDH superfamily. LDH family. As to quaternary structure, homotetramer. Interacts with RABL2/RABL2A; binds preferentially to GTP-bound RABL2.

It localises to the cytoplasm. It carries out the reaction (S)-lactate + NAD(+) = pyruvate + NADH + H(+). It functions in the pathway fermentation; pyruvate fermentation to lactate; (S)-lactate from pyruvate: step 1/1. Its function is as follows. Possible role in sperm motility. The chain is L-lactate dehydrogenase C chain (LDHC) from Sus scrofa (Pig).